Reading from the N-terminus, the 32-residue chain is Peptide tarsal-less AA (32 aa).

The disordered stretch occupies residues 1 to 32 (MLDPTGTYRRPRDTQDSRQKRRQDCLDPTGQY). Repeat 1 spans residues 2–8 (LDPTGTY). The segment at 2–32 (LDPTGTYRRPRDTQDSRQKRRQDCLDPTGQY) is 2 X 7 AA repeats of L-D-P-T-G-[TQ]-Y. Basic and acidic residues predominate over residues 10-25 (RPRDTQDSRQKRRQDC). Repeat unit 2 spans residues 26-32 (LDPTGQY).

The protein localises to the cytoplasm. Its subcellular location is the nucleus. Functionally, one of four peptides (tal-1A, tal-2A, tal-3A and tal-AA) produced from a polycistronic gene that function redundantly in several developmental processes. Required in early stages of leg development for the intercalation of the tarsal segments during the mid-third instar stage and later for tarsal joint formation. Promotes the post-translational modification of ovo isoform B (svb) into its active form which in turn initiates trichome development and promotes tarsal joint development. This is likely due to recruitment of the E3 ubiquitin-protein ligase Ubr3 to svb for ubiquitination of its N-terminus, converting svb into a transcriptional activator. Also enhances interaction of Ubr3 with Diap1. Required for correct wing and leg formation through its regulation of several genes including those in the Notch signaling pathway. Essential for denticle formation and may have a role in the developmental timing of trichome differentiation. Essential for the development of taenidial folds in the trachea. The protein is Peptide tarsal-less AA of Drosophila melanogaster (Fruit fly).